The primary structure comprises 257 residues: Protein UL24 homolog (257 aa).

Residues 193–257 (KKPKMDRGGK…PRAGPACSGP (65 aa)) form a disordered region.

The protein belongs to the herpesviridae UL24 family.

It is found in the virion. The protein localises to the host cytoplasm. Its subcellular location is the host nucleus. The protein resides in the host nucleolus. It localises to the host Golgi apparatus. In terms of biological role, may participate in nuclear egress of viral particles. Plays a role in the dispersal of several host nucleolar proteins including NCL/nucleolin and NPM1. Since deletion of host NCL/nucleolin negatively impact on nuclear egress, UL24 supposedly acts on this process through its effect on host nucleoli. Induces cell cycle arrest in host cells at the G2/M phase following by apoptosis. The mechanism involves the inhibition of host mitotic complex cyclin-B/CDK1. The polypeptide is Protein UL24 homolog (ORF20) (Homo sapiens (Human)).